The primary structure comprises 359 residues: Phospho-N-acetylmuramoyl-pentapeptide-transferase (359 aa).

The next 10 membrane-spanning stretches (helical) occupy residues 21–41, 73–93, 98–118, 143–163, 166–186, 202–222, 237–257, 261–281, 286–306, and 336–356; these read YITFRTIYASLTAFLICFLLG, TMGGLLIVFSVLVACLLWADL, IWVTLAALAGFTTIGFIDDYL, GICLLIFAASDTNTVLLVPFF, VAPDLGLFYIVLGVFVIVGTS, PLVISFVAYMVFAYVAGNAII, VTVFCGAMAGGLMGFLWFNAY, IFMGDVGSLSLGGALGTVAII, ILLTLVGGLFVVETLSVIFQV, and KIIVRFWIIAIALALIAVSTL.

It belongs to the glycosyltransferase 4 family. MraY subfamily. The cofactor is Mg(2+).

It localises to the cell inner membrane. The enzyme catalyses UDP-N-acetyl-alpha-D-muramoyl-L-alanyl-gamma-D-glutamyl-meso-2,6-diaminopimeloyl-D-alanyl-D-alanine + di-trans,octa-cis-undecaprenyl phosphate = di-trans,octa-cis-undecaprenyl diphospho-N-acetyl-alpha-D-muramoyl-L-alanyl-D-glutamyl-meso-2,6-diaminopimeloyl-D-alanyl-D-alanine + UMP. It functions in the pathway cell wall biogenesis; peptidoglycan biosynthesis. Its function is as follows. Catalyzes the initial step of the lipid cycle reactions in the biosynthesis of the cell wall peptidoglycan: transfers peptidoglycan precursor phospho-MurNAc-pentapeptide from UDP-MurNAc-pentapeptide onto the lipid carrier undecaprenyl phosphate, yielding undecaprenyl-pyrophosphoryl-MurNAc-pentapeptide, known as lipid I. The protein is Phospho-N-acetylmuramoyl-pentapeptide-transferase of Desulfosudis oleivorans (strain DSM 6200 / JCM 39069 / Hxd3) (Desulfococcus oleovorans).